Consider the following 195-residue polypeptide: Thymidine kinase (195 aa).

ATP is bound by residues A9–S16 and D89–Q92. E90 functions as the Proton acceptor in the catalytic mechanism. Zn(2+) is bound by residues C147, C149, C184, and H187.

It belongs to the thymidine kinase family. Homotetramer.

Its subcellular location is the cytoplasm. The catalysed reaction is thymidine + ATP = dTMP + ADP + H(+). This is Thymidine kinase from Rhizobium meliloti (strain 1021) (Ensifer meliloti).